The primary structure comprises 287 residues: 4-diphosphocytidyl-2-C-methyl-D-erythritol kinase (287 aa).

The active site involves K11. 93–103 (PFGAGLGGGSS) provides a ligand contact to ATP. Residue D135 is part of the active site.

It belongs to the GHMP kinase family. IspE subfamily.

It carries out the reaction 4-CDP-2-C-methyl-D-erythritol + ATP = 4-CDP-2-C-methyl-D-erythritol 2-phosphate + ADP + H(+). The protein operates within isoprenoid biosynthesis; isopentenyl diphosphate biosynthesis via DXP pathway; isopentenyl diphosphate from 1-deoxy-D-xylulose 5-phosphate: step 3/6. Catalyzes the phosphorylation of the position 2 hydroxy group of 4-diphosphocytidyl-2C-methyl-D-erythritol. The chain is 4-diphosphocytidyl-2-C-methyl-D-erythritol kinase from Pelodictyon phaeoclathratiforme (strain DSM 5477 / BU-1).